The primary structure comprises 301 residues: Protein SCO1 homolog, mitochondrial (301 aa).

A mitochondrion-targeting transit peptide spans 1 to 67 (MAMLVLVPGR…PGYCLGTRPL (67 aa)). The tract at residues 63–91 (GTRPLSTARPPPPWSQKGPGDSTRPSKPG) is disordered. Topologically, residues 68–92 (STARPPPPWSQKGPGDSTRPSKPGP) are mitochondrial matrix. A helical membrane pass occupies residues 93 to 111 (VSWKSLAITFAIGGALLAG). At 112–301 (MKHVKKEKAE…THMRPYRKKS (190 aa)) the chain is on the mitochondrial intermembrane side. The tract at residues 118-131 (EKAEKLEKERQRHI) is important for dimerization. Residues C169, C173, and H260 each contribute to the Cu cation site. An intrachain disulfide couples C169 to C173.

It belongs to the SCO1/2 family. In terms of assembly, homodimer. Interacts with COA6. Found in a complex with TMEM177, COX20, COA6, MT-CO2/COX2, COX18 and SCO2. Interacts with TMEM177 in a COX20-dependent manner. Interacts with COX20 in a MT-CO2/COX2- and COX18-dependent manner. Interacts with COX16. As to expression, predominantly expressed in tissues characterized by high rates of oxidative phosphorylation (OxPhos), including muscle, heart, and brain.

It is found in the mitochondrion. The protein localises to the mitochondrion inner membrane. Its function is as follows. Copper metallochaperone essential for the maturation of cytochrome c oxidase subunit II (MT-CO2/COX2). Not required for the synthesis of MT-CO2/COX2 but plays a crucial role in stabilizing MT-CO2/COX2 during its subsequent maturation. Involved in transporting copper to the Cu(A) site on MT-CO2/COX2. Plays an important role in the regulation of copper homeostasis by controlling the abundance and cell membrane localization of copper transporter CTR1. The sequence is that of Protein SCO1 homolog, mitochondrial (SCO1) from Homo sapiens (Human).